A 361-amino-acid chain; its full sequence is dTDP-glucose 4,6-dehydratase 1 (361 aa).

NAD(+) is bound by residues 11-12 (FI), 32-35 (DKLT), 58-59 (DI), 80-84 (LAAES), and T99. S84 contributes to the substrate binding site. T133 contributes to the substrate binding site. The Proton donor role is filled by D134. Active-site proton acceptor residues include E135 and Y167. NAD(+) is bound at residue 167–171 (YSASK). N196 provides a ligand contact to substrate. N197 is a binding site for NAD(+). Substrate is bound by residues 206 to 207 (KL), 222 to 224 (PIY), R231, N266, and 296 to 300 (DRPGH).

Belongs to the NAD(P)-dependent epimerase/dehydratase family. dTDP-glucose dehydratase subfamily. In terms of assembly, homodimer. The cofactor is NAD(+).

It carries out the reaction dTDP-alpha-D-glucose = dTDP-4-dehydro-6-deoxy-alpha-D-glucose + H2O. It functions in the pathway carbohydrate biosynthesis; dTDP-L-rhamnose biosynthesis. The protein operates within bacterial outer membrane biogenesis; LPS O-antigen biosynthesis. In terms of biological role, catalyzes the dehydration of dTDP-D-glucose to form dTDP-6-deoxy-D-xylo-4-hexulose via a three-step process involving oxidation, dehydration and reduction. This chain is dTDP-glucose 4,6-dehydratase 1 (rfbB), found in Escherichia coli (strain K12).